The following is a 549-amino-acid chain: Protein EPD1 (549 aa).

Positions 1–22 (MLLNSLFPSILAAATFVTSAAA) are cleaved as a signal peptide. Residues Asn40 and Asn59 are each glycosylated (N-linked (GlcNAc...) asparagine). Cys72 and Cys101 are disulfide-bonded. N-linked (GlcNAc...) asparagine glycosylation is found at Asn147 and Asn163. Intrachain disulfides connect Cys214-Cys347, Cys232-Cys263, Cys369-Cys420, Cys378-Cys444, and Cys397-Cys402. Polar residues predominate over residues 336-356 (AESASGVSRTSCPTNTDNWEA). The interval 336-361 (AESASGVSRTSCPTNTDNWEASTELP) is disordered. The N-linked (GlcNAc...) asparagine glycan is linked to Asn383. Residues Asn408 and Asn438 are each glycosylated (N-linked (GlcNAc...) asparagine). A disordered region spans residues 479-519 (SVRTDTSEATTDSGSGSSNSGSASSSKSTSSSTSSGSSGSK). Low complexity predominate over residues 487 to 519 (ATTDSGSGSSNSGSASSSKSTSSSTSSGSSGSK).

This sequence belongs to the glycosyl hydrolase 72 family.

The protein resides in the cell membrane. The polypeptide is Protein EPD1 (EPD1) (Candida maltosa (Yeast)).